Reading from the N-terminus, the 739-residue chain is Double-strand break repair protein mus-23 (739 aa).

Asp16, His18, Asp56, and Asn123 together coordinate Mn(2+). His124 functions as the Proton donor in the catalytic mechanism. Residues His212, His240, and His242 each coordinate Mn(2+). The disordered stretch occupies residues 516–739 (FDAGQHKQAQ…KPGLLARRLG (224 aa)). Residues 523 to 532 (QAQRTKRFKR) are compositionally biased toward basic residues. Basic and acidic residues predominate over residues 559–568 (VEPKGNDRPT). Residues 599–636 (KRGAAAKTTAAAKKAAPGKKAAPAKKAAPAKKAAPAKK) are compositionally biased toward low complexity. A compositionally biased stretch (basic residues) spans 637-646 (APARGRKKKT). Acidic residues predominate over residues 650 to 686 (DSDEEEEEDYPEDDDEEEEEADEEEEDVIMEDDEEDP). Residues 694–722 (KATSRVASTRASARATPVRATPARATQAR) are compositionally biased toward low complexity.

Belongs to the MRE11/RAD32 family. Component of the MRN complex composed of two heterodimers RAD50 and MRE11 associated with a single NBS1. It depends on Mn(2+) as a cofactor.

The protein resides in the nucleus. The protein localises to the chromosome. It is found in the telomere. Its function is as follows. Core component of the MRN complex, which plays a central role in double-strand break (DSB) repair, DNA recombination, maintenance of telomere integrity and meiosis. The MRN complex is involved in the repair of DNA double-strand breaks (DSBs) via homologous recombination (HR), an error-free mechanism which primarily occurs during S and G2 phases. The complex (1) mediates the end resection of damaged DNA, which generates proper single-stranded DNA, a key initial steps in HR, and is (2) required for the recruitment of other repair factors and efficient activation of ATM and ATR upon DNA damage. Within the MRN complex, MRE11 possesses both single-strand endonuclease activity and double-strand-specific 3'-5' exonuclease activity. MRE11 first endonucleolytically cleaves the 5' strand at DNA DSB ends to prevent non-homologous end joining (NHEJ) and licence HR. It then generates a single-stranded DNA gap via 3' to 5' exonucleolytic degradation, which is required for single-strand invasion and recombination. The MRN complex is also required for the processing of R-loops. This is Double-strand break repair protein mus-23 (mus-23) from Neurospora crassa (strain ATCC 24698 / 74-OR23-1A / CBS 708.71 / DSM 1257 / FGSC 987).